Here is a 111-residue protein sequence, read N- to C-terminus: Nucleoid-associated protein Ppha_1174 (111 aa).

This sequence belongs to the YbaB/EbfC family. As to quaternary structure, homodimer.

It localises to the cytoplasm. The protein localises to the nucleoid. Its function is as follows. Binds to DNA and alters its conformation. May be involved in regulation of gene expression, nucleoid organization and DNA protection. This chain is Nucleoid-associated protein Ppha_1174, found in Pelodictyon phaeoclathratiforme (strain DSM 5477 / BU-1).